A 1088-amino-acid polypeptide reads, in one-letter code: Platelet-derived growth factor receptor alpha (1088 aa).

An N-terminal signal peptide occupies residues Met-1 to Gln-23. Ig-like C2-type domains are found at residues Leu-24–Glu-112, Ile-116–Ser-200, Glu-201–Thr-305, Pro-318–Ser-409, and Pro-413–Val-516. Residues Leu-24–Ala-527 lie on the Extracellular side of the membrane. Cys-48 and Cys-99 form a disulfide bridge. Residues Asn-75, Asn-102, and Asn-178 are each glycosylated (N-linked (GlcNAc...) asparagine). Disulfide bonds link Cys-149/Cys-188 and Cys-234/Cys-289. N-linked (GlcNAc...) asparagine glycosylation is found at Asn-352, Asn-358, Asn-457, and Asn-467. An intrachain disulfide couples Cys-434 to Cys-500. The helical transmembrane segment at Ala-528–Trp-548 threads the bilayer. At Lys-549–Leu-1088 the chain is on the cytoplasmic side. A phosphotyrosine; by autocatalysis mark is found at Tyr-571 and Tyr-573. Positions Leu-592 to Leu-953 constitute a Protein kinase domain. Residues Leu-598 to Val-606 and Lys-626 each bind ATP. Phosphotyrosine; by autocatalysis is present on residues Tyr-719, Tyr-730, Tyr-741, Tyr-753, Tyr-761, and Tyr-767. Residue Asp-817 is the Proton acceptor of the active site. Phosphotyrosine; by autocatalysis occurs at positions 848, 987, and 1017. Residues Tyr-1017–Leu-1088 are disordered. A compositionally biased stretch (polar residues) spans Ser-1040–Phe-1058. Positions Glu-1064–Leu-1088 are enriched in acidic residues.

This sequence belongs to the protein kinase superfamily. Tyr protein kinase family. CSF-1/PDGF receptor subfamily. In terms of assembly, interacts with homodimeric PDGFA, PDGFB and PDGFC, and with heterodimers formed by PDGFA and PDGFB. Monomer in the absence of bound ligand. Interaction with dimeric PDGFA, PDGFB and/or PDGFC leads to receptor dimerization, where both PDGFRA homodimers and heterodimers with PDGFRB are observed. Interacts (tyrosine phosphorylated) with SHB (via SH2 domain). Interacts (tyrosine phosphorylated) with SHF (via SH2 domain). Interacts (tyrosine phosphorylated) with SRC (via SH2 domain). Interacts (tyrosine phosphorylated) with PIK3R1. Interacts (tyrosine phosphorylated) with PLCG1 (via SH2 domain). Interacts (tyrosine phosphorylated) with CRK, GRB2 and GRB7. Interacts with CD248; this interaction promotes PDGF receptor signaling pathway. Post-translationally, ubiquitinated, leading to its internalization and degradation. In terms of processing, autophosphorylated on tyrosine residues upon ligand binding. Autophosphorylation occurs in trans, i.e. one subunit of the dimeric receptor phosphorylates tyrosine residues on the other subunit. Phosphorylation at Tyr-730 and Tyr-741 is important for interaction with PIK3R1. Phosphorylation at Tyr-719 and Tyr-753 is important for interaction with PTPN11. Phosphorylation at Tyr-761 is important for interaction with CRK. Phosphorylation at Tyr-571 and Tyr-573 is important for interaction with SRC and SRC family members. Phosphorylation at Tyr-987 and Tyr-1017 is important for interaction with PLCG1.

It localises to the cell membrane. The protein localises to the cell projection. The protein resides in the cilium. It is found in the golgi apparatus. The enzyme catalyses L-tyrosyl-[protein] + ATP = O-phospho-L-tyrosyl-[protein] + ADP + H(+). With respect to regulation, present in an inactive conformation in the absence of bound ligand. Binding of PDGFA and/or PDGFB leads to dimerization and activation by autophosphorylation on tyrosine residues. Inhibited by imatinib, nilotinib and sorafenib. Functionally, tyrosine-protein kinase that acts as a cell-surface receptor for PDGFA, PDGFB and PDGFC and plays an essential role in the regulation of embryonic development, cell proliferation, survival and chemotaxis. Depending on the context, promotes or inhibits cell proliferation and cell migration. Plays an important role in the differentiation of bone marrow-derived mesenchymal stem cells. Required for normal skeleton development and cephalic closure during embryonic development. Required for normal development of the mucosa lining the gastrointestinal tract, and for recruitment of mesenchymal cells and normal development of intestinal villi. Plays a role in cell migration and chemotaxis in wound healing. Plays a role in platelet activation, secretion of agonists from platelet granules, and in thrombin-induced platelet aggregation. Binding of its cognate ligands - homodimeric PDGFA, homodimeric PDGFB, heterodimers formed by PDGFA and PDGFB or homodimeric PDGFC -leads to the activation of several signaling cascades; the response depends on the nature of the bound ligand and is modulated by the formation of heterodimers between PDGFRA and PDGFRB. Phosphorylates PIK3R1, PLCG1, and PTPN11. Activation of PLCG1 leads to the production of the cellular signaling molecules diacylglycerol and inositol 1,4,5-trisphosphate, mobilization of cytosolic Ca(2+) and the activation of protein kinase C. Phosphorylates PIK3R1, the regulatory subunit of phosphatidylinositol 3-kinase, and thereby mediates activation of the AKT1 signaling pathway. Mediates activation of HRAS and of the MAP kinases MAPK1/ERK2 and/or MAPK3/ERK1. Promotes activation of STAT family members STAT1, STAT3 and STAT5A and/or STAT5B. Receptor signaling is down-regulated by protein phosphatases that dephosphorylate the receptor and its down-stream effectors, and by rapid internalization of the activated receptor. This is Platelet-derived growth factor receptor alpha (Pdgfra) from Rattus norvegicus (Rat).